Here is a 406-residue protein sequence, read N- to C-terminus: CinA-like protein (406 aa).

It belongs to the CinA family.

The chain is CinA-like protein from Deinococcus geothermalis (strain DSM 11300 / CIP 105573 / AG-3a).